We begin with the raw amino-acid sequence, 406 residues long: Phosphatidylserine decarboxylase proenzyme, mitochondrial (406 aa).

The N-terminal 49 residues, 1 to 49, are a transit peptide targeting the mitochondrion; it reads MAVAGGRGCVRSLREGVLWRSSPCHCDYTATRHFLGALQKLPLQAWVRK. Topologically, residues 50 to 60 are mitochondrial matrix; the sequence is VHTAPLRTLFL. Residues 61–79 traverse the membrane as a helical segment; it reads LRPVPILLAAGGGYAGYRQ. The Mitochondrial intermembrane portion of the chain corresponds to 80 to 406; the sequence is YEKYRERQLE…ILFGEALGSL (327 aa). Catalysis depends on charge relay system; for autoendoproteolytic cleavage activity residues D188, H264, and S375. S375 (schiff-base intermediate with substrate; via pyruvic acid; for decarboxylase activity) is an active-site residue. Residue S375 is modified to Pyruvic acid (Ser); by autocatalysis.

Belongs to the phosphatidylserine decarboxylase family. PSD-B subfamily. Eukaryotic type I sub-subfamily. As to quaternary structure, heterodimer of a large membrane-associated beta subunit and a small pyruvoyl-containing alpha subunit. The cofactor is pyruvate. Post-translationally, is synthesized initially as an inactive proenzyme. Formation of the active enzyme involves a self-maturation process in which the active site pyruvoyl group is generated from an internal serine residue via an autocatalytic post-translational modification. Two non-identical subunits are generated from the proenzyme in this reaction, and the pyruvate is formed at the N-terminus of the alpha chain, which is derived from the carboxyl end of the proenzyme. The autoendoproteolytic cleavage occurs by a canonical serine protease mechanism, in which the side chain hydroxyl group of the serine supplies its oxygen atom to form the C-terminus of the beta chain, while the remainder of the serine residue undergoes an oxidative deamination to produce ammonia and the pyruvoyl prosthetic group on the alpha chain. During this reaction, the Ser that is part of the protease active site of the proenzyme becomes the pyruvoyl prosthetic group, which constitutes an essential element of the active site of the mature decarboxylase.

It is found in the mitochondrion inner membrane. The protein localises to the cytoplasm. It localises to the lipid droplet. The enzyme catalyses a 1,2-diacyl-sn-glycero-3-phospho-L-serine + H(+) = a 1,2-diacyl-sn-glycero-3-phosphoethanolamine + CO2. It participates in phospholipid metabolism; phosphatidylethanolamine biosynthesis. Inhibited by hydroxylamine. Its function is as follows. Catalyzes the formation of phosphatidylethanolamine (PtdEtn) from phosphatidylserine (PtdSer). Plays a central role in phospholipid metabolism and in the interorganelle trafficking of phosphatidylserine. May be involved in lipid droplet biogenesis at the endoplasmic reticulum membrane. This is Phosphatidylserine decarboxylase proenzyme, mitochondrial from Rattus norvegicus (Rat).